The following is a 499-amino-acid chain: MSCSGRSLMVVGTSSHVGKTLLVTALCRILKKAGKRVAPFKAQNMSLNAYVTPDGKEIAYAQALQAWAAGIPPAVEMNPILLKPQGNLTSQIVLNGVAVGTYRAGEYYERWFAPAWQAVKEALARLQKQYDWILCEGAGSPAEVNLKHRDLANMRVALHLGSPTWLVADIDRGGALAHVVGTLQLLEPEERALIRGIVINKFRGSRELLQPGLDWLENYTGIPVVGVLPWVDWVLPQEDSMGIAANPLLWEDRRDRAGGQALREGRLEIAVVRLPQVANFSDFDPLLAEPTVHLRWVHPGQSLGSPDVVILPGSKTTLNDLFALQKTGLAEQLRQYSGHIVGICGGLQMLGETIADPEGWEGIAGTYSGLGFLPLTTVLQPTKVTQQVQTQSRWPALAPIQGYEIHQGSTQADPSGCLPLFDRENLGWRDPTGRIWGSYLHGLFDNHLWRRQWLNWLRRQKGWDPLPELEGHYAQQREQLLERLADLWQPHLDLGLLME.

Residues 266-449 (RLEIAVVRLP…LHGLFDNHLW (184 aa)) form the GATase cobBQ-type domain. C344 functions as the Nucleophile in the catalytic mechanism. H441 is a catalytic residue.

This sequence belongs to the CobB/CobQ family. CobQ subfamily.

The protein operates within cofactor biosynthesis; adenosylcobalamin biosynthesis. Catalyzes amidations at positions B, D, E, and G on adenosylcobyrinic A,C-diamide. NH(2) groups are provided by glutamine, and one molecule of ATP is hydrogenolyzed for each amidation. This chain is Cobyric acid synthase, found in Synechococcus sp. (strain JA-2-3B'a(2-13)) (Cyanobacteria bacterium Yellowstone B-Prime).